Here is a 417-residue protein sequence, read N- to C-terminus: Probable glucuronosyltransferase GUT1 (417 aa).

Residues 1–15 are Cytoplasmic-facing; the sequence is MGTRRRSARARARPP. Residues 16 to 36 form a helical; Signal-anchor for type II membrane protein membrane-spanning segment; the sequence is LAMPLAVLLLFACSSGVAAAA. At 37–417 the chain is on the lumenal side; the sequence is AQGIERIKDD…EGTREDLKPW (381 aa). Residues N144 and N405 are each glycosylated (N-linked (GlcNAc...) asparagine).

It belongs to the glycosyltransferase 47 family.

Its subcellular location is the golgi apparatus membrane. In terms of biological role, involved in the synthesis of glucuronoxylan hemicellulose in secondary cell walls. This is Probable glucuronosyltransferase GUT1 (GUT1) from Oryza sativa subsp. japonica (Rice).